The chain runs to 437 residues: GTPase Obg (437 aa).

Residues 2-160 (SMFLDTAKIS…RELQLELKIL (159 aa)) form the Obg domain. Residues 161–338 (ADVGLVGFPS…LMDATAELLA (178 aa)) form the OBG-type G domain. GTP is bound by residues 167–174 (GFPSVGKS), 192–196 (FTTIV), 214–217 (DLPG), 284–287 (NKMD), and 319–321 (SSL). Residues S174 and T194 each coordinate Mg(2+). The OCT domain occupies 359–437 (GFNEDERPFE…IGNFEFEFVD (79 aa)).

Belongs to the TRAFAC class OBG-HflX-like GTPase superfamily. OBG GTPase family. In terms of assembly, monomer. Mg(2+) is required as a cofactor.

The protein localises to the cytoplasm. In terms of biological role, an essential GTPase which binds GTP, GDP and possibly (p)ppGpp with moderate affinity, with high nucleotide exchange rates and a fairly low GTP hydrolysis rate. Plays a role in control of the cell cycle, stress response, ribosome biogenesis and in those bacteria that undergo differentiation, in morphogenesis control. This chain is GTPase Obg, found in Streptococcus agalactiae serotype Ia (strain ATCC 27591 / A909 / CDC SS700).